The chain runs to 409 residues: L-cysteine:1D-myo-inositol 2-amino-2-deoxy-alpha-D-glucopyranoside ligase (409 aa).

C43 contributes to the Zn(2+) binding site. L-cysteinyl-5'-AMP contacts are provided by residues 43 to 46, T58, and 81 to 83; these read CGIT and NVT. Positions 45 to 55 match the 'HIGH' region motif; that stretch reads ITPYDATHMGH. Positions 183 to 188 match the 'ERGGDP' region motif; it reads ERGGDP. W224 provides a ligand contact to L-cysteinyl-5'-AMP. Zn(2+) is bound at residue C228. 246–248 lines the L-cysteinyl-5'-AMP pocket; it reads GSD. H253 serves as a coordination point for Zn(2+). V280 serves as a coordination point for L-cysteinyl-5'-AMP. The 'KMSKS' region motif lies at 286-290; the sequence is KMSKS.

Belongs to the class-I aminoacyl-tRNA synthetase family. MshC subfamily. In terms of assembly, monomer. It depends on Zn(2+) as a cofactor.

The catalysed reaction is 1D-myo-inositol 2-amino-2-deoxy-alpha-D-glucopyranoside + L-cysteine + ATP = 1D-myo-inositol 2-(L-cysteinylamino)-2-deoxy-alpha-D-glucopyranoside + AMP + diphosphate + H(+). Its function is as follows. Catalyzes the ATP-dependent condensation of GlcN-Ins and L-cysteine to form L-Cys-GlcN-Ins. This chain is L-cysteine:1D-myo-inositol 2-amino-2-deoxy-alpha-D-glucopyranoside ligase, found in Streptomyces scabiei (strain 87.22).